A 949-amino-acid polypeptide reads, in one-letter code: General transcription factor II-I repeat domain-containing protein 2B (949 aa).

GTF2I-like repeat units follow at residues Gln-98–Gly-192 and Leu-323–Gly-417.

The protein belongs to the TFII-I family. In terms of tissue distribution, ubiquitous.

It localises to the nucleus. The protein is General transcription factor II-I repeat domain-containing protein 2B (GTF2IRD2B) of Homo sapiens (Human).